Consider the following 343-residue polypeptide: Palmitoyltransferase ZDHHC4 (343 aa).

Residues 1-2 (MD) lie on the Lumenal side of the membrane. Residues 3-23 (FLVLFLFYLAFLLICVVLICI) form a helical membrane-spanning segment. Residues 24–67 (FTKSQRLKAVVLGGAQVCSRVIPQCLQRAVQTLLHQLFHTRHPT) lie on the Cytoplasmic side of the membrane. Residues 68 to 88 (FIVLHLLLQGLVYAEYTCEVF) form a helical membrane-spanning segment. Residues 89–100 (GYCRELEFSLPY) lie on the Lumenal side of the membrane. The helical transmembrane segment at 101 to 121 (LLLPYVLLSVNLVFFTLTCAA) threads the bilayer. At 122 to 193 (NPGTITKANE…NCIGAWNTRY (72 aa)) the chain is on the cytoplasmic side. Positions 149-199 (SRCPTCDLRKPARSKHCRLCDRCVHRFDHHCVWVNNCIGAWNTRYFLIYLL) constitute a DHHC domain. Cysteine 179 (S-palmitoyl cysteine intermediate) is an active-site residue. The helical transmembrane segment at 194-214 (FLIYLLTLTASAATIATVTAA) threads the bilayer. The Lumenal portion of the chain corresponds to 215 to 255 (FLLRLVTVSDLYQETYLDDVGHFQAVDTVFLIQHLFLAFPR). A helical transmembrane segment spans residues 256–276 (IVFLLGFVIVLSMLLAGYLCF). Topologically, residues 277–343 (ALYLAATNQT…ATPSYKKKEK (67 aa)) are cytoplasmic. A Di-lysine motif motif is present at residues 340–343 (KKEK).

Belongs to the DHHC palmitoyltransferase family. Interacts with CPT1A.

The protein resides in the endoplasmic reticulum membrane. It localises to the golgi apparatus membrane. The protein localises to the cell membrane. It catalyses the reaction L-cysteinyl-[protein] + hexadecanoyl-CoA = S-hexadecanoyl-L-cysteinyl-[protein] + CoA. In terms of biological role, palmitoyltransferase that could catalyze the addition of palmitate onto protein substrates including the D(2) dopamine receptor DRD2, GSK3B or MAVS. Mediates GSK3B palmitoylation to prevent its AKT1-mediated phosphorylation leading to activation of the STAT3 signaling pathway. Also catalyzes MAVS palmitoylation which promotes its stabilization and activation by inhibiting 'Lys-48'- but facilitating 'Lys-63'-linked ubiquitination. This is Palmitoyltransferase ZDHHC4 from Mus musculus (Mouse).